The sequence spans 230 residues: Large ribosomal subunit protein uL1 (230 aa).

The protein belongs to the universal ribosomal protein uL1 family. As to quaternary structure, part of the 50S ribosomal subunit.

Its function is as follows. Binds directly to 23S rRNA. The L1 stalk is quite mobile in the ribosome, and is involved in E site tRNA release. Functionally, protein L1 is also a translational repressor protein, it controls the translation of the L11 operon by binding to its mRNA. The chain is Large ribosomal subunit protein uL1 from Thermoanaerobacter sp. (strain X514).